We begin with the raw amino-acid sequence, 398 residues long: Phosphoglycerate kinase (398 aa).

Substrate contacts are provided by residues 23–25 (DLN), R38, 61–64 (HFGR), R120, and R153. ATP-binding positions include K203, E325, and 355 to 358 (GGDT).

The protein belongs to the phosphoglycerate kinase family. Monomer.

Its subcellular location is the cytoplasm. It catalyses the reaction (2R)-3-phosphoglycerate + ATP = (2R)-3-phospho-glyceroyl phosphate + ADP. It participates in carbohydrate degradation; glycolysis; pyruvate from D-glyceraldehyde 3-phosphate: step 2/5. The chain is Phosphoglycerate kinase from Sphingopyxis alaskensis (strain DSM 13593 / LMG 18877 / RB2256) (Sphingomonas alaskensis).